The following is a 64-amino-acid chain: UPF0434 protein MADE_1009415 (64 aa).

This sequence belongs to the UPF0434 family.

The chain is UPF0434 protein MADE_1009415 from Alteromonas mediterranea (strain DSM 17117 / CIP 110805 / LMG 28347 / Deep ecotype).